The sequence spans 213 residues: MQLPLALCLVCLLVHTAFRVVEGQGWQAFKNDATEIIPELGEYPEPPPELENNKTMNRAENGGRPPHHPFETKDVSEYSCRELHFTRYVTDGPCRSAKPVTELVCSGQCGPARLLPNAIGRGKWWRPSGPDFRCIPDRYRAQRVQLLCPGGEAPRARKVRLVASCKCKRLTRFHNQSELKDFGTEAARPQKGRKPRPRARSAKANQAELENAY.

Residues 1–23 (MQLPLALCLVCLLVHTAFRVVEG) form the signal peptide. The interval 41–71 (GEYPEPPPELENNKTMNRAENGGRPPHHPFE) is disordered. A glycan (N-linked (GlcNAc...) asparagine) is linked at Asn53. Disulfide bonds link Cys80–Cys134, Cys94–Cys148, Cys105–Cys165, and Cys109–Cys167. A CTCK domain is found at 82–172 (ELHFTRYVTD…ASCKCKRLTR (91 aa)). An N-linked (GlcNAc...) asparagine glycan is attached at Asn175. The disordered stretch occupies residues 178-213 (ELKDFGTEAARPQKGRKPRPRARSAKANQAELENAY). A compositionally biased stretch (basic residues) spans 190-201 (QKGRKPRPRARS).

It belongs to the sclerostin family. As to quaternary structure, interacts with LRP4 (via the extracellular domain); the interaction facilitates the inhibition of Wnt signaling. Interacts with LRP5 (via the first two YWTD-EGF repeat domains); the interaction inhibits Wnt-mediated signaling. Interacts with LRP6. As to expression, widely expressed at low levels with highest levels in bone, cartilage, kidney, liver, bone marrow and primary osteoblasts differentiated for 21 days. Detected in the subendothelial layer of the aortic intima (at protein level).

The protein localises to the secreted. Its subcellular location is the extracellular space. It localises to the extracellular matrix. Functionally, negative regulator of bone growth that acts through inhibition of Wnt signaling and bone formation. This chain is Sclerostin, found in Homo sapiens (Human).